Reading from the N-terminus, the 183-residue chain is Ly6/PLAUR domain-containing protein 6B (183 aa).

The first 39 residues, 1 to 39, serve as a signal peptide directing secretion; that stretch reads MLYKSSDRPAHKVSMLLLCHALAIAVVQIVIFSESWAFA. The region spanning 60 to 151 is the UPAR/Ly6 domain; that stretch reads FKCFTCENAG…VELPTNHTNA (92 aa). The segment at 60–154 is sufficient for inhibiting alpha-7 nAChR currents; the sequence is FKCFTCENAG…PTNHTNAVFA (95 aa). 6 disulfides stabilise this stretch: C62–C90, C65–C74, C83–C109, C115–C134, C120–C131, and C135–C140. S164 carries the GPI-anchor amidated serine lipid modification. Positions 165–183 are cleaved as a propeptide — removed in mature form; that stretch reads SAPTLYLPVLAWVFVLPLL.

The protein localises to the cell membrane. Its function is as follows. Likely acts as a modulator of nicotinic acetylcholine receptors (nAChRs) activity. In vitro acts on nAChRs in a subtype- and stoichiometry-dependent manner. Modulates specifically alpha-3(3):beta-4(2) nAChRs by enhancing the sensitivity to ACh, decreasing ACh-induced maximal current response and increasing the rate of desensitization to ACh; has no effect on alpha-7 homomeric nAChRs; modulates alpha-3(2):alpha-5:beta-4(2) nAChRs in the context of CHRNA5/alpha-5 variant Asn-398 but not its wild-type sequence. However, according to another report in vitro it can weakly inhibits alpha-7 nAChRs. The chain is Ly6/PLAUR domain-containing protein 6B (LYPD6B) from Homo sapiens (Human).